The following is a 307-amino-acid chain: UDP-3-O-acyl-N-acetylglucosamine deacetylase (307 aa).

3 residues coordinate Zn(2+): H78, H241, and D245. The active-site Proton donor is H268.

Belongs to the LpxC family. It depends on Zn(2+) as a cofactor.

The catalysed reaction is a UDP-3-O-[(3R)-3-hydroxyacyl]-N-acetyl-alpha-D-glucosamine + H2O = a UDP-3-O-[(3R)-3-hydroxyacyl]-alpha-D-glucosamine + acetate. It participates in glycolipid biosynthesis; lipid IV(A) biosynthesis; lipid IV(A) from (3R)-3-hydroxytetradecanoyl-[acyl-carrier-protein] and UDP-N-acetyl-alpha-D-glucosamine: step 2/6. Its function is as follows. Catalyzes the hydrolysis of UDP-3-O-myristoyl-N-acetylglucosamine to form UDP-3-O-myristoylglucosamine and acetate, the committed step in lipid A biosynthesis. The protein is UDP-3-O-acyl-N-acetylglucosamine deacetylase of Delftia acidovorans (strain DSM 14801 / SPH-1).